Reading from the N-terminus, the 544-residue chain is Cytochrome P450 monooxygenase cle2 (544 aa).

Residues 19-39 (LGLLIGLSLILSITWTAYTIL) form a helical membrane-spanning segment. The interval 273–305 (RTQQVEQSIEKNTKNEKKEDEDEDQNEDEETPG) is disordered. Over residues 280-290 (SIEKNTKNEKK) the composition is skewed to basic and acidic residues. The segment covering 291 to 304 (EDEDEDQNEDEETP) has biased composition (acidic residues). Cys478 lines the heme pocket.

Belongs to the cytochrome P450 family. Heme is required as a cofactor.

It localises to the membrane. It functions in the pathway secondary metabolite biosynthesis; terpenoid biosynthesis. In terms of biological role, cytochrome P450 monooxygenase; part of the cluster A that mediates the biosynthesis of chevalone E and its oxidized derivatives that possess a unique five-membered lactone ring and can synergistically enhance the cytotoxicity of doxorubicin (DOX) in breast cancer cells. Within the pathway, cle2 is involved in hydroxylation of the chavalone E scaffold at position C-20 and contributes with cle4 to the production of seven oxidation derivatives. The molecular scaffold is commonly biosynthesized by a series of enzymes including the non-reducing polyketide synthase (NR-PKS) cle1 that produces the alpha-pyrone triacetic acid lactone (TAL); The membrane-bound prenyltransferase cle5 that accepts TAL as its substrate to perform a C-3 geranylgeranylation reaction, in which the pathway-dedicated GGPS cle6 is required to provide GGPP, the other substrate of cle5; the FAD-dependent monooxygenase Cle3 that forms an (S)-epoxide ring at the terminal olefin of the geranylgeranyl group; and the terpene cyclase Cle7 that catalyzes the cyclization of the prenyl group that yields the pentacyclic pathway intermediate chevalone E. Chevalone E can derivatize into seven new oxidized analogs by the cytochrome P450 monooxygenases cle2 (acting at C-20) and cle4 (acting at C-11 and C-12). This chain is Cytochrome P450 monooxygenase cle2, found in Aspergillus versicolor.